The following is a 296-amino-acid chain: Zinc finger CCCH-type antiviral protein 1-like (296 aa).

Ala2 carries the N-acetylalanine modification. 2 consecutive C3H1-type zinc fingers follow at residues 111–136 and 198–219; these read LCRR…HDIH and VCKS…HQLI.

In Mus musculus (Mouse), this protein is Zinc finger CCCH-type antiviral protein 1-like (Zc3hav1l).